Consider the following 608-residue polypeptide: Albumin (608 aa).

A signal peptide spans 1–18 (MKWVTFISLFFLFSSAYS). A propeptide spanning residues 19–24 (RGLVRR) is cleaved from the precursor. 3 Albumin domains span residues 19-210 (RGLV…EALR), 211-403 (EKVL…EFKP), and 404-601 (LVDE…KLVA). S29 is subject to Phosphoserine. 2 residues coordinate Ca(2+): E30 and D37. Residues C77 and C86 are joined by a disulfide bond. A phosphoserine mark is found at S82 and S89. H91 serves as a coordination point for Zn(2+). 6 disulfides stabilise this stretch: C99/C115, C114/C125, C148/C193, C192/C201, C224/C270, and C269/C277. Position 229 is an N6-succinyllysine (K229). E268 serves as a coordination point for Ca(2+). Zn(2+) is bound by residues H271 and D273. D273, E276, D279, and D283 together coordinate Ca(2+). Cystine bridges form between C289–C303, C302–C313, C340–C385, C384–C393, C416–C462, C461–C472, C485–C501, and C500–C511. S443 bears the Phosphoserine mark. T444 and T446 each carry phosphothreonine. N6-succinyllysine is present on K460. Phosphoserine is present on S513. Disulfide bonds link C538–C583 and C582–C591. K558 carries the N6-methyllysine modification. The residue at position 570 (T570) is a Phosphothreonine. The residue at position 588 (K588) is an N6-succinyllysine.

Belongs to the ALB/AFP/VDB family. In terms of assembly, interacts with FCGRT; this interaction regulates ALB homeostasis. Interacts with TASOR. In plasma, occurs in a covalently-linked complex with chromophore-bound alpha-1-microglobulin; this interaction does not prevent fatty acid binding to ALB. Post-translationally, phosphorylated by FAM20C in the extracellular medium. Plasma.

The protein localises to the secreted. Binds water, Ca(2+), Na(+), K(+), fatty acids, hormones, bilirubin and drugs. Its main function is the regulation of the colloidal osmotic pressure of blood. Major zinc transporter in plasma, typically binds about 80% of all plasma zinc. Major calcium and magnesium transporter in plasma, binds approximately 45% of circulating calcium and magnesium in plasma. Potentially has more than two calcium-binding sites and might additionally bind calcium in a non-specific manner. The shared binding site between zinc and calcium at residue Asp-273 suggests a crosstalk between zinc and calcium transport in the blood. The rank order of affinity is zinc &gt; calcium &gt; magnesium. Binds to the bacterial siderophore enterobactin and inhibits enterobactin-mediated iron uptake of E.coli from ferric transferrin, and may thereby limit the utilization of iron and growth of enteric bacteria such as E.coli. Does not prevent iron uptake by the bacterial siderophore aerobactin. The polypeptide is Albumin (ALB) (Canis lupus familiaris (Dog)).